Here is a 620-residue protein sequence, read N- to C-terminus: GTP-binding protein At3g49725, chloroplastic (620 aa).

Residues 1 to 65 constitute a chloroplast transit peptide; the sequence is MSVTTSFGIW…SSFLARDRLR (65 aa). The segment at 57–100 is disordered; the sequence is SFLARDRLRSKTPSSSPFSSKRHTPKTSEIEEESTPKDSVLLNP. The 240-residue stretch at 346–585 folds into the Hflx-type G domain; the sequence is GTIAVVGYTN…LIDDKMKEKK (240 aa). GTP-binding positions include 352–359, 377–381, 399–402, and 468–471; these read GYTNAGKS, FATLD, DTVG, and NKID. Mg(2+)-binding residues include serine 359 and threonine 379. Composition is skewed to acidic residues over residues 478–497 and 511–521; these read EEEK…EDEA and TVDEDQIQNGD. The disordered stretch occupies residues 478–521; it reads EEEKYLDDGEGVGEEDEDEADLKAEETVDASEATVDEDQIQNGD. 563-565 is a GTP binding site; that stretch reads SAL. The tract at residues 597-620 is disordered; sequence LHKRKWRPPRNDDEEERLIPLDQR.

It belongs to the TRAFAC class OBG-HflX-like GTPase superfamily. HflX GTPase family. The cofactor is Mg(2+).

Its subcellular location is the plastid. It localises to the chloroplast. This is GTP-binding protein At3g49725, chloroplastic from Arabidopsis thaliana (Mouse-ear cress).